We begin with the raw amino-acid sequence, 450 residues long: tRNA-2-methylthio-N(6)-dimethylallyladenosine synthase (450 aa).

Residues 17-131 (KKFFVKTYGC…LNHVLDEVLA (115 aa)) form the MTTase N-terminal domain. [4Fe-4S] cluster is bound by residues cysteine 26, cysteine 62, cysteine 94, cysteine 168, cysteine 172, and cysteine 175. Residues 154 to 385 (REDQIKAYVS…LQLQDTIYMK (232 aa)) enclose the Radical SAM core domain. Positions 388-450 (QAFLGQTVEV…SHQTLLGDLQ (63 aa)) constitute a TRAM domain.

The protein belongs to the methylthiotransferase family. MiaB subfamily. In terms of assembly, monomer. The cofactor is [4Fe-4S] cluster.

The protein resides in the cytoplasm. It catalyses the reaction N(6)-dimethylallyladenosine(37) in tRNA + (sulfur carrier)-SH + AH2 + 2 S-adenosyl-L-methionine = 2-methylsulfanyl-N(6)-dimethylallyladenosine(37) in tRNA + (sulfur carrier)-H + 5'-deoxyadenosine + L-methionine + A + S-adenosyl-L-homocysteine + 2 H(+). Its function is as follows. Catalyzes the methylthiolation of N6-(dimethylallyl)adenosine (i(6)A), leading to the formation of 2-methylthio-N6-(dimethylallyl)adenosine (ms(2)i(6)A) at position 37 in tRNAs that read codons beginning with uridine. The protein is tRNA-2-methylthio-N(6)-dimethylallyladenosine synthase of Protochlamydia amoebophila (strain UWE25).